The chain runs to 145 residues: Nicking endonuclease (145 aa).

A disordered region spans residues 126–145 (NPQEKTQVKTETKSGFARFL).

In terms of biological role, endonuclease responsible for the single-chain interruptions (nicks) located at specific positions in the minus strand of the viral genome. In Escherichia phage T5 (Enterobacteria phage T5), this protein is Nicking endonuclease.